The chain runs to 291 residues: Malectin (291 aa).

Residues 1–30 (MLRPRGAEGTAVALLRLLLLLLLLGPKLRG) form the signal peptide. At 31–268 (PGLGVVGAAG…TPNPYASDNS (238 aa)) the chain is on the lumenal side. A carbohydrate is bound by residues Y81, Y103, Y130, F131, and D200. The segment at 220–264 (LQPHPGLEKKEEEEEEEEYDEGSNLKRQTNKNRVQSGPRTPNPYA) is disordered. A compositionally biased stretch (acidic residues) spans 230-240 (EEEEEEEEYDE). Positions 244–264 (LKRQTNKNRVQSGPRTPNPYA) are enriched in polar residues. N267 carries N-linked (GlcNAc...) asparagine glycosylation. Residues 269–289 (SLMFPILVAFGVFIPTLFCLC) traverse the membrane as a helical segment. The Cytoplasmic segment spans residues 290–291 (RL).

Belongs to the malectin family. In terms of assembly, interacts with the oligosaccharyltransferase (OST) complex.

Its subcellular location is the endoplasmic reticulum membrane. Carbohydrate-binding protein with a strong ligand preference for Glc2-N-glycan. May play a role in the early steps of protein N-glycosylation. This Mus musculus (Mouse) protein is Malectin.